Here is a 204-residue protein sequence, read N- to C-terminus: Lysozyme G (204 aa).

Positions 1 to 19 (MHLMLVLLGLAALLGTSQS) are cleaved as a signal peptide. 2 disulfide bridges follow: cysteine 23/cysteine 79 and cysteine 37/cysteine 48. Catalysis depends on residues glutamate 92 and aspartate 105.

This sequence belongs to the glycosyl hydrolase 23 family.

Its subcellular location is the secreted. The enzyme catalyses Hydrolysis of (1-&gt;4)-beta-linkages between N-acetylmuramic acid and N-acetyl-D-glucosamine residues in a peptidoglycan and between N-acetyl-D-glucosamine residues in chitodextrins.. Its function is as follows. Has bacteriolytic activity against M.luteus. In Dromaius novaehollandiae (Emu), this protein is Lysozyme G.